A 227-amino-acid polypeptide reads, in one-letter code: Cytochrome c oxidase subunit 2 (227 aa).

At 1-14 the chain is on the mitochondrial intermembrane side; that stretch reads MAYPMQLGFQDATS. Residues 15-45 traverse the membrane as a helical segment; sequence PIMEELLHFHDHTLMIVFLISSLVLYIISLM. Over 46–59 the chain is Mitochondrial matrix; it reads LTTKLTHTSTMDAQ. Residues 60–87 traverse the membrane as a helical segment; that stretch reads EVETIWTILPAIILILIALPSLRILYMM. Topologically, residues 88 to 227 are mitochondrial intermembrane; it reads DEINNPSLTV…YFEKWSASML (140 aa). Cu cation contacts are provided by H161, C196, E198, C200, H204, and M207. E198 is a binding site for Mg(2+). At Y218 the chain carries Phosphotyrosine.

This sequence belongs to the cytochrome c oxidase subunit 2 family. Component of the cytochrome c oxidase (complex IV, CIV), a multisubunit enzyme composed of 14 subunits. The complex is composed of a catalytic core of 3 subunits MT-CO1, MT-CO2 and MT-CO3, encoded in the mitochondrial DNA, and 11 supernumerary subunits COX4I, COX5A, COX5B, COX6A, COX6B, COX6C, COX7A, COX7B, COX7C, COX8 and NDUFA4, which are encoded in the nuclear genome. The complex exists as a monomer or a dimer and forms supercomplexes (SCs) in the inner mitochondrial membrane with NADH-ubiquinone oxidoreductase (complex I, CI) and ubiquinol-cytochrome c oxidoreductase (cytochrome b-c1 complex, complex III, CIII), resulting in different assemblies (supercomplex SCI(1)III(2)IV(1) and megacomplex MCI(2)III(2)IV(2)). Found in a complex with TMEM177, COA6, COX18, COX20, SCO1 and SCO2. Interacts with TMEM177 in a COX20-dependent manner. Interacts with COX20. Interacts with COX16. The cofactor is Cu cation.

It localises to the mitochondrion inner membrane. It catalyses the reaction 4 Fe(II)-[cytochrome c] + O2 + 8 H(+)(in) = 4 Fe(III)-[cytochrome c] + 2 H2O + 4 H(+)(out). In terms of biological role, component of the cytochrome c oxidase, the last enzyme in the mitochondrial electron transport chain which drives oxidative phosphorylation. The respiratory chain contains 3 multisubunit complexes succinate dehydrogenase (complex II, CII), ubiquinol-cytochrome c oxidoreductase (cytochrome b-c1 complex, complex III, CIII) and cytochrome c oxidase (complex IV, CIV), that cooperate to transfer electrons derived from NADH and succinate to molecular oxygen, creating an electrochemical gradient over the inner membrane that drives transmembrane transport and the ATP synthase. Cytochrome c oxidase is the component of the respiratory chain that catalyzes the reduction of oxygen to water. Electrons originating from reduced cytochrome c in the intermembrane space (IMS) are transferred via the dinuclear copper A center (CU(A)) of subunit 2 and heme A of subunit 1 to the active site in subunit 1, a binuclear center (BNC) formed by heme A3 and copper B (CU(B)). The BNC reduces molecular oxygen to 2 water molecules using 4 electrons from cytochrome c in the IMS and 4 protons from the mitochondrial matrix. This Boselaphus tragocamelus (Nilgai) protein is Cytochrome c oxidase subunit 2 (MT-CO2).